We begin with the raw amino-acid sequence, 148 residues long: Aspartate 1-decarboxylase (148 aa).

S25 (schiff-base intermediate with substrate; via pyruvic acid) is an active-site residue. A Pyruvic acid (Ser) modification is found at S25. Residue T57 participates in substrate binding. Residue Y58 is the Proton donor of the active site. Position 73–75 (73–75) interacts with substrate; the sequence is GAA.

It belongs to the PanD family. As to quaternary structure, heterooctamer of four alpha and four beta subunits. Pyruvate is required as a cofactor. Post-translationally, is synthesized initially as an inactive proenzyme, which is activated by self-cleavage at a specific serine bond to produce a beta-subunit with a hydroxyl group at its C-terminus and an alpha-subunit with a pyruvoyl group at its N-terminus.

Its subcellular location is the cytoplasm. It catalyses the reaction L-aspartate + H(+) = beta-alanine + CO2. The protein operates within cofactor biosynthesis; (R)-pantothenate biosynthesis; beta-alanine from L-aspartate: step 1/1. Its function is as follows. Catalyzes the pyruvoyl-dependent decarboxylation of aspartate to produce beta-alanine. The polypeptide is Aspartate 1-decarboxylase (Rhodococcus erythropolis (strain PR4 / NBRC 100887)).